A 961-amino-acid chain; its full sequence is Mitogen-activated protein kinase kinase kinase 13-A (961 aa).

Residues 88–118 (LRDQDEPENTAPQGSSHSGDGGSYSGNEDIR) are disordered. The 242-residue stretch at 169–410 (ISELQWLGSG…FRQILMHLDI (242 aa)) folds into the Protein kinase domain. ATP-binding positions include 175–183 (LGSGAQGAV) and Lys-196. Asp-280 acts as the Proton acceptor in catalysis. 2 leucine-zipper regions span residues 434 to 455 (VKKHFEKIKSEGTCIHRLDEEL) and 487 to 508 (LSAIMLQLEVREKELIRREQAV). Positions 458–497 (RRREELRHALDIREHYERKLERANNLYMELSAIMLQLEVR) form a coiled coil. Disordered regions lie at residues 513–600 (PGTY…SKGS), 615–637 (ALSQQSSQHQTLASPPVTSCSPY), and 799–883 (RRIR…KLDD). The span at 560 to 578 (SAEGSAASASPISGSPKTS) shows a compositional bias: low complexity. A compositionally biased stretch (basic residues) spans 584–596 (NRYRSKPRHRRVN). A compositionally biased stretch (acidic residues) spans 810–823 (ESSEEEEGEVDSEV). Residues 811 to 824 (SSEEEEGEVDSEVE) form an acidic region. The span at 837-851 (KCQSYSTFSSENFSV) shows a compositional bias: polar residues.

It belongs to the protein kinase superfamily. Ser/Thr protein kinase family.

The protein localises to the cytoplasm. It is found in the membrane. It carries out the reaction L-seryl-[protein] + ATP = O-phospho-L-seryl-[protein] + ADP + H(+). It catalyses the reaction L-threonyl-[protein] + ATP = O-phospho-L-threonyl-[protein] + ADP + H(+). May have a role in the JNK signaling pathway. This chain is Mitogen-activated protein kinase kinase kinase 13-A (map3k13-a), found in Xenopus laevis (African clawed frog).